The chain runs to 284 residues: Ribosomal RNA small subunit methyltransferase A (284 aa).

Residues Asn28, Leu30, Gly55, Glu77, Asp103, and Asn123 each coordinate S-adenosyl-L-methionine.

The protein belongs to the class I-like SAM-binding methyltransferase superfamily. rRNA adenine N(6)-methyltransferase family. RsmA subfamily.

It is found in the cytoplasm. The catalysed reaction is adenosine(1518)/adenosine(1519) in 16S rRNA + 4 S-adenosyl-L-methionine = N(6)-dimethyladenosine(1518)/N(6)-dimethyladenosine(1519) in 16S rRNA + 4 S-adenosyl-L-homocysteine + 4 H(+). Functionally, specifically dimethylates two adjacent adenosines (A1518 and A1519) in the loop of a conserved hairpin near the 3'-end of 16S rRNA in the 30S particle. May play a critical role in biogenesis of 30S subunits. The polypeptide is Ribosomal RNA small subunit methyltransferase A (Bradyrhizobium diazoefficiens (strain JCM 10833 / BCRC 13528 / IAM 13628 / NBRC 14792 / USDA 110)).